The sequence spans 688 residues: Translation initiation factor IF-2 (688 aa).

2 stretches are compositionally biased toward basic and acidic residues: residues 53–62 (GKEKSEKTKE) and 86–95 (KRDDKNEKVN). The disordered stretch occupies residues 53–100 (GKEKSEKTKEEDDEIETTAKNPIKESMNNKKSNKRDDKNEKVNTENAE). Positions 187–354 (KRSPIITVMG…MILLSSEILE (168 aa)) constitute a tr-type G domain. The segment at 196–203 (GHVDHGKT) is G1. Position 196-203 (196-203 (GHVDHGKT)) interacts with GTP. The segment at 221–225 (GITQH) is G2. Residues 242–245 (DTPG) form a G3 region. GTP contacts are provided by residues 242-246 (DTPGH) and 296-299 (NKID). The tract at residues 296–299 (NKID) is G4. Residues 332 to 334 (SAH) form a G5 region.

It belongs to the TRAFAC class translation factor GTPase superfamily. Classic translation factor GTPase family. IF-2 subfamily.

The protein localises to the cytoplasm. Functionally, one of the essential components for the initiation of protein synthesis. Protects formylmethionyl-tRNA from spontaneous hydrolysis and promotes its binding to the 30S ribosomal subunits. Also involved in the hydrolysis of GTP during the formation of the 70S ribosomal complex. The polypeptide is Translation initiation factor IF-2 (Clostridium botulinum (strain Loch Maree / Type A3)).